Here is a 417-residue protein sequence, read N- to C-terminus: D-amino acid dehydrogenase (417 aa).

V3–W17 lines the FAD pocket.

The protein belongs to the DadA oxidoreductase family. The cofactor is FAD.

It catalyses the reaction a D-alpha-amino acid + A + H2O = a 2-oxocarboxylate + AH2 + NH4(+). The protein operates within amino-acid degradation; D-alanine degradation; NH(3) and pyruvate from D-alanine: step 1/1. Its function is as follows. Oxidative deamination of D-amino acids. The protein is D-amino acid dehydrogenase of Pectobacterium atrosepticum (strain SCRI 1043 / ATCC BAA-672) (Erwinia carotovora subsp. atroseptica).